Reading from the N-terminus, the 1398-residue chain is MAP-homologous protein 1 (1398 aa).

The residue at position 1 (methionine 1) is an N-acetylmethionine. The interval 21–77 is disordered; it reads GWLVRPSASTSKSSRPGKSESKANSVAPDIQMDTARPPVFETSVDSSSSILSSNDKG. Over residues 27-36 the composition is skewed to polar residues; the sequence is SASTSKSSRP. Residues 63–73 show a composition bias toward low complexity; that stretch reads SVDSSSSILSS. Serine 81 is subject to Phosphoserine. 3 disordered regions span residues 90 to 144, 156 to 186, and 191 to 210; these read NQRA…APAP, HRKKDQEQQEKERERKERSPSPTHVDRGAAI, and TATISAESPPPLQYNAPPSY. Composition is skewed to polar residues over residues 91–102 and 114–123; these read QRANAGSTSVPT and VVETNLSNVE. Residues 159–186 are compositionally biased toward basic and acidic residues; sequence KDQEQQEKERERKERSPSPTHVDRGAAI. Lysine 221 is covalently cross-linked (Glycyl lysine isopeptide (Lys-Gly) (interchain with G-Cter in ubiquitin)). Residue threonine 222 is modified to Phosphothreonine. 4 disordered regions span residues 244–270, 296–382, 395–428, and 515–548; these read HSPEEGKVDGTSPADDHNYGGSRPDPR, SSAS…PSSH, GNNNNNSTNASSLSANVNNPDTSSTSLWSSSSME, and NPEEDDANAKSKEEMAPQKQNEVEAHDEEDNNSQ. A phosphoserine mark is found at serine 309, serine 311, serine 354, and serine 357. Low complexity predominate over residues 357–371; sequence SIVDTVDSNSDVSSS. Residues 372 to 381 show a composition bias toward polar residues; that stretch reads AQNNNQTPSS. Positions 396 to 426 are enriched in low complexity; sequence NNNNNSTNASSLSANVNNPDTSSTSLWSSSS. The span at 521-538 shows a compositional bias: basic and acidic residues; the sequence is ANAKSKEEMAPQKQNEVE. The residue at position 577 (threonine 577) is a Phosphothreonine. The span at 605–615 shows a compositional bias: low complexity; it reads STSSLASMVSS. 3 disordered regions span residues 605–630, 1148–1169, and 1203–1223; these read STSSLASMVSSDTNGTNADDEGEILP, LKSPEAVSKSRKGGNQAQPNSE, and DAEDAVEFREGDDSNVNHEDV. A compositionally biased stretch (polar residues) spans 1160 to 1169; sequence GGNQAQPNSE. Residues 1208–1223 are compositionally biased toward basic and acidic residues; sequence VEFREGDDSNVNHEDV. A tau/MAP repeat-like region spans residues 1227–1258; the sequence is DQQFRDEVDIKNKYSIIKRELEHEKLVGGGDL. Positions 1313–1372 are disordered; sequence QEETAFRTKDEQQSSQSNDSSANASPTTDPISTGSNTSRTNDNAHIPPTDAPGFDKFMNN. Positions 1325–1337 are enriched in low complexity; it reads QSSQSNDSSANAS. The segment covering 1338-1355 has biased composition (polar residues); sequence PTTDPISTGSNTSRTNDN.

Its subcellular location is the cytoplasm. It is found in the cytoskeleton. It localises to the spindle. Its function is as follows. Essential for the formation and/or stabilization of microtubules. Binds to microtubules in vitro. This Saccharomyces cerevisiae (strain ATCC 204508 / S288c) (Baker's yeast) protein is MAP-homologous protein 1 (MHP1).